A 207-amino-acid chain; its full sequence is Protein GrpE (207 aa).

Residues 1–11 (MTETDGQKDNN) are compositionally biased toward basic and acidic residues. Residues 1-40 (MTETDGQKDNNQDTAQAAADPVVSKPYIMPDDPEEGSNEA) are disordered.

This sequence belongs to the GrpE family. In terms of assembly, homodimer.

It is found in the cytoplasm. Functionally, participates actively in the response to hyperosmotic and heat shock by preventing the aggregation of stress-denatured proteins, in association with DnaK and GrpE. It is the nucleotide exchange factor for DnaK and may function as a thermosensor. Unfolded proteins bind initially to DnaJ; upon interaction with the DnaJ-bound protein, DnaK hydrolyzes its bound ATP, resulting in the formation of a stable complex. GrpE releases ADP from DnaK; ATP binding to DnaK triggers the release of the substrate protein, thus completing the reaction cycle. Several rounds of ATP-dependent interactions between DnaJ, DnaK and GrpE are required for fully efficient folding. This Rhodopseudomonas palustris (strain ATCC BAA-98 / CGA009) protein is Protein GrpE.